Consider the following 664-residue polypeptide: Pentatricopeptide repeat-containing protein At1g10910, chloroplastic (664 aa).

Residues 1 to 72 (METPLLVGLE…KRHSNSYLAR (72 aa)) constitute a chloroplast transit peptide. PPR repeat units follow at residues 165–199 (NVYI…GLKP), 200–235 (DVVT…GIQM), 236–270 (DSVM…GHSP), 271–305 (NIYH…GLVP), 306–340 (NKVM…GYAE), 341–375 (NEMP…GVRS), 376–406 (DGYA…SETT), 411–445 (DLVM…AVSP), and 446–480 (DYNT…GHRL).

Belongs to the PPR family. P subfamily.

The protein resides in the plastid. It localises to the chloroplast. This Arabidopsis thaliana (Mouse-ear cress) protein is Pentatricopeptide repeat-containing protein At1g10910, chloroplastic.